A 121-amino-acid chain; its full sequence is Small ribosomal subunit protein bS6 (121 aa).

Belongs to the bacterial ribosomal protein bS6 family.

Functionally, binds together with bS18 to 16S ribosomal RNA. The protein is Small ribosomal subunit protein bS6 of Rickettsia canadensis (strain McKiel).